Reading from the N-terminus, the 573-residue chain is MRASQLLISTLKETPADADIVSHQLMLRAGMIRRLSSGLYTWLPLGLRTLRKVENIVREEMNRAGAQEVLMPSIQPAELWQESGRWDQYGNLLLRIRDRHERDFCYGPTHEEVITDLVRNEIRSYKQLPSNFYQIQTKFRDETRPRFGVMRAREFIMKDAYSFDIDQAGLQRSYDAMYDAYMRIFTRLGLDFRAVEADNGDIGGSGSHEFQVLADSGEDAVIFSTGSDYAANIEKAEALPAPLGETPERPAPQEELRLVDTPNARTIATLVEQHGLPIEKTIKTLMVHGSEGGLVALLVRGDHELNEVKAENLPEVAAPLTMASEEEIRAAVGAGPGSLGPVNLDMPLIIDRSVALMSDFGAGANIDGQHYFGINWERDVALPKVADLRNVVEGDPSPDGKGTLSIARGIEVGHVFQLGTKYSTAMNATVLDDNGQAVPLLMGCYGIGVTRVVAAAIEQNHDAGGIIWPDAIAPFEIALVPMNAHKSERVREYADTLYQQLSDAGFDVLIDDRDLRPGVKFADQELIGIPHRVVIGDRGLDNDELEYKGRRDSDVTMVPTEGLLSFLRERITK.

The protein belongs to the class-II aminoacyl-tRNA synthetase family. ProS type 1 subfamily. As to quaternary structure, homodimer.

The protein localises to the cytoplasm. It carries out the reaction tRNA(Pro) + L-proline + ATP = L-prolyl-tRNA(Pro) + AMP + diphosphate. In terms of biological role, catalyzes the attachment of proline to tRNA(Pro) in a two-step reaction: proline is first activated by ATP to form Pro-AMP and then transferred to the acceptor end of tRNA(Pro). As ProRS can inadvertently accommodate and process non-cognate amino acids such as alanine and cysteine, to avoid such errors it has two additional distinct editing activities against alanine. One activity is designated as 'pretransfer' editing and involves the tRNA(Pro)-independent hydrolysis of activated Ala-AMP. The other activity is designated 'posttransfer' editing and involves deacylation of mischarged Ala-tRNA(Pro). The misacylated Cys-tRNA(Pro) is not edited by ProRS. The polypeptide is Proline--tRNA ligase (Chromohalobacter salexigens (strain ATCC BAA-138 / DSM 3043 / CIP 106854 / NCIMB 13768 / 1H11)).